A 180-amino-acid chain; its full sequence is Beta-lactoglobulin (180 aa).

Residues 1-18 (MKCLLLALGLALACGIQA) form the signal peptide. Intrachain disulfides connect C84/C178, C124/C137, and C124/C139.

The protein belongs to the calycin superfamily. Lipocalin family. As to quaternary structure, under physiological conditions beta-lactoglobulin exists as an equilibrium mixture of monomeric and dimeric forms. Interaction with LMBR1L is controversial. Alternate disulfide bonds occur in equal amounts. In terms of tissue distribution, synthesized in mammary gland and secreted in milk.

It localises to the secreted. In terms of biological role, primary component of whey, it binds retinol and is probably involved in the transport of that molecule. The sequence is that of Beta-lactoglobulin (LGB) from Capra hircus (Goat).